The primary structure comprises 97 residues: Small ribosomal subunit protein bS20 (97 aa).

Belongs to the bacterial ribosomal protein bS20 family.

In terms of biological role, binds directly to 16S ribosomal RNA. The sequence is that of Small ribosomal subunit protein bS20 from Methylibium petroleiphilum (strain ATCC BAA-1232 / LMG 22953 / PM1).